The chain runs to 206 residues: Outer-membrane lipoprotein carrier protein (206 aa).

The signal sequence occupies residues 1–21 (MKKLLCAVLLSPLLYSNAVLA).

This sequence belongs to the LolA family. In terms of assembly, monomer.

The protein localises to the periplasm. Functionally, participates in the translocation of lipoproteins from the inner membrane to the outer membrane. Only forms a complex with a lipoprotein if the residue after the N-terminal Cys is not an aspartate (The Asp acts as a targeting signal to indicate that the lipoprotein should stay in the inner membrane). The polypeptide is Outer-membrane lipoprotein carrier protein (Shewanella sp. (strain MR-4)).